The following is a 127-amino-acid chain: Aspartate 1-decarboxylase (127 aa).

The active-site Schiff-base intermediate with substrate; via pyruvic acid is serine 25. Serine 25 bears the Pyruvic acid (Ser) mark. Residue threonine 57 participates in substrate binding. The active-site Proton donor is tyrosine 58. 73 to 75 provides a ligand contact to substrate; sequence GAA.

Belongs to the PanD family. As to quaternary structure, heterooctamer of four alpha and four beta subunits. Pyruvate serves as cofactor. Post-translationally, is synthesized initially as an inactive proenzyme, which is activated by self-cleavage at a specific serine bond to produce a beta-subunit with a hydroxyl group at its C-terminus and an alpha-subunit with a pyruvoyl group at its N-terminus.

It localises to the cytoplasm. It catalyses the reaction L-aspartate + H(+) = beta-alanine + CO2. It functions in the pathway cofactor biosynthesis; (R)-pantothenate biosynthesis; beta-alanine from L-aspartate: step 1/1. Functionally, catalyzes the pyruvoyl-dependent decarboxylation of aspartate to produce beta-alanine. The sequence is that of Aspartate 1-decarboxylase from Bacillus licheniformis (strain ATCC 14580 / DSM 13 / JCM 2505 / CCUG 7422 / NBRC 12200 / NCIMB 9375 / NCTC 10341 / NRRL NRS-1264 / Gibson 46).